We begin with the raw amino-acid sequence, 448 residues long: tRNA(Ile)-lysidine synthase (448 aa).

Residue 25–30 (SGGSDS) coordinates ATP.

It belongs to the tRNA(Ile)-lysidine synthase family.

The protein localises to the cytoplasm. It catalyses the reaction cytidine(34) in tRNA(Ile2) + L-lysine + ATP = lysidine(34) in tRNA(Ile2) + AMP + diphosphate + H(+). Its function is as follows. Ligates lysine onto the cytidine present at position 34 of the AUA codon-specific tRNA(Ile) that contains the anticodon CAU, in an ATP-dependent manner. Cytidine is converted to lysidine, thus changing the amino acid specificity of the tRNA from methionine to isoleucine. The protein is tRNA(Ile)-lysidine synthase of Brucella melitensis biotype 2 (strain ATCC 23457).